Here is a 156-residue protein sequence, read N- to C-terminus: Large ribosomal subunit protein uL15 (156 aa).

Residues 1–16 (MVRRFKRGTKYRRGSR) are compositionally biased toward basic residues. Positions 1-37 (MVRRFKRGTKYRRGSRTHGWGRVGQHRKSGGSGGKGM) are disordered.

This sequence belongs to the universal ribosomal protein uL15 family. In terms of assembly, part of the 50S ribosomal subunit.

Its function is as follows. Binds to the 23S rRNA. This Pyrobaculum aerophilum (strain ATCC 51768 / DSM 7523 / JCM 9630 / CIP 104966 / NBRC 100827 / IM2) protein is Large ribosomal subunit protein uL15.